The following is a 431-amino-acid chain: Tryptophan synthase beta chain (431 aa).

Residue Lys109 is modified to N6-(pyridoxal phosphate)lysine.

It belongs to the TrpB family. In terms of assembly, tetramer of two alpha and two beta chains. The cofactor is pyridoxal 5'-phosphate.

It catalyses the reaction (1S,2R)-1-C-(indol-3-yl)glycerol 3-phosphate + L-serine = D-glyceraldehyde 3-phosphate + L-tryptophan + H2O. It participates in amino-acid biosynthesis; L-tryptophan biosynthesis; L-tryptophan from chorismate: step 5/5. The beta subunit is responsible for the synthesis of L-tryptophan from indole and L-serine. This chain is Tryptophan synthase beta chain, found in Deinococcus radiodurans (strain ATCC 13939 / DSM 20539 / JCM 16871 / CCUG 27074 / LMG 4051 / NBRC 15346 / NCIMB 9279 / VKM B-1422 / R1).